We begin with the raw amino-acid sequence, 240 residues long: Transmembrane emp24 domain-containing protein 6 (240 aa).

The first 21 residues, 1–21 (MSPLLFGAGLVVLNLVTSARS), serve as a signal peptide directing secretion. The Lumenal portion of the chain corresponds to 22 to 200 (QKTEPLSGSG…FFLIQSNYNY (179 aa)). Positions 53–138 (TECFWQFAHQ…SVQVYLNFGV (86 aa)) constitute a GOLD domain. Residues Asn107 and Asn156 are each glycosylated (N-linked (GlcNAc...) asparagine). The chain crosses the membrane as a helical span at residues 201–223 (VNWWSTAQSLVIILSGILQLYFL). Over 224 to 240 (KRLFNVPTTTDTKKPRC) the chain is Cytoplasmic.

This sequence belongs to the EMP24/GP25L family.

The protein localises to the endoplasmic reticulum membrane. The polypeptide is Transmembrane emp24 domain-containing protein 6 (TMED6) (Homo sapiens (Human)).